The sequence spans 229 residues: C-&gt;U-editing enzyme APOBEC-1 (229 aa).

The region spanning 10–134 (VDPTLRRRIE…QRNRQGLRDL (125 aa)) is the CMP/dCMP-type deaminase domain. His-61 is a Zn(2+) binding site. Glu-63 functions as the Proton donor in the catalytic mechanism. Cys-93 and Cys-96 together coordinate Zn(2+).

This sequence belongs to the cytidine and deoxycytidylate deaminase family. As to quaternary structure, homodimer. Interacts with A1CF; form an mRNA editing complex. Interacts with RBM47; form an mRNA editing complex. Found in a complex with CELF2/CUGBP2 and A1CF. Interacts with HNRPAB. Interacts with SYNCRIP. Requires Zn(2+) as cofactor. As to expression, expressed in the spleen. Expressed at lower level in the kidney, testis, lung, brain and liver.

It is found in the cytoplasm. The protein resides in the nucleus. The catalysed reaction is a cytidine in mRNA + H2O + H(+) = a uridine in mRNA + NH4(+). It carries out the reaction cytidine(6666) in apoB mRNA + H2O + H(+) = uridine(6666) in apoB mRNA + NH4(+). Functionally, cytidine deaminase catalyzing the cytidine to uridine postranscriptional editing of a variety of mRNAs. Form complexes with cofactors that confer differential editing activity and selectivity. Responsible for the postranscriptional editing of a CAA codon for Gln to a UAA codon for stop in the apolipoprotein B mRNA. Also involved in CGA (Arg) to UGA (Stop) editing in the NF1 mRNA. May also play a role in the epigenetic regulation of gene expression by participating in DNA demethylation. The protein is C-&gt;U-editing enzyme APOBEC-1 of Mus musculus (Mouse).